We begin with the raw amino-acid sequence, 500 residues long: Na(+)/H(+) antiporter NhaB (500 aa).

12 consecutive transmembrane segments (helical) span residues 28–50, 68–88, 98–118, 121–141, 145–165, 205–225, 244–264, 311–331, 350–370, 394–414, 449–469, and 477–497; these read FLLLNPLLLWLAGPVTSAWVLVG, GGLLVLEALLLGLATPEALYA, LLLMFMVAGIYFMKDLLLLLF, LLLGVRSKALLSLLFCLLAAL, FLDALTVTAVVISVAVAFFAV, LLMHAAVGTALGGVCTLVGEP, QVAPVSMPVLAAGLLTCVLLE, VLIVGLALHVAEVGLIGLLVI, FQEALPFTALLVVFFAVVAVI, MLFIANGLLSAISDNVFVATI, VATPNGQAAFLFLLTSSIAPL, and MVWMALPYTLVMGGLGWWAVS.

The protein belongs to the NhaB Na(+)/H(+) (TC 2.A.34) antiporter family.

It is found in the cell inner membrane. The enzyme catalyses 2 Na(+)(in) + 3 H(+)(out) = 2 Na(+)(out) + 3 H(+)(in). Na(+)/H(+) antiporter that extrudes sodium in exchange for external protons. In Pseudomonas aeruginosa (strain UCBPP-PA14), this protein is Na(+)/H(+) antiporter NhaB.